The following is a 359-amino-acid chain: MRAYNFCAGPAALPTAVLEKAQQELLDWQGKGLSIMEMSHRSADYVAVAEKAEADLRKLMNIPENYKVLFLQGGASLQFSAIPLNLLGKNNKADYIHTGIWSEKALKEAKRYGDINVVEAGIKVDGKFAISEQSEWNLSDDAAYVHYADNETIGGLQFAGVPDVKAPLVCDFSSSILSAPLDVSKFGLIYAGAQKNIGPAGLTIVIIRDDLLDQAKAEIPSILKYADQAKNGSMVNTPSTYAWYLSGLVFEWLLEQGGVDAIHKVNLEKAQLLYGYIDSSDFYNNPIAIPNRSIMNVPFTLADEALEKQFLKEAEANHLLNLAGHRSVGGMRASIYNAVPLEGVQALIRFMDDFAKRNG.

Position 41 (Arg41) interacts with L-glutamate. Residues 75 to 76 (AS), Trp101, Thr152, Asp171, and Gln194 contribute to the pyridoxal 5'-phosphate site. At Lys195 the chain carries N6-(pyridoxal phosphate)lysine. Residue 236–237 (NT) participates in pyridoxal 5'-phosphate binding.

This sequence belongs to the class-V pyridoxal-phosphate-dependent aminotransferase family. SerC subfamily. In terms of assembly, homodimer. Requires pyridoxal 5'-phosphate as cofactor.

Its subcellular location is the cytoplasm. The catalysed reaction is O-phospho-L-serine + 2-oxoglutarate = 3-phosphooxypyruvate + L-glutamate. The enzyme catalyses 4-(phosphooxy)-L-threonine + 2-oxoglutarate = (R)-3-hydroxy-2-oxo-4-phosphooxybutanoate + L-glutamate. It functions in the pathway amino-acid biosynthesis; L-serine biosynthesis; L-serine from 3-phospho-D-glycerate: step 2/3. It participates in cofactor biosynthesis; pyridoxine 5'-phosphate biosynthesis; pyridoxine 5'-phosphate from D-erythrose 4-phosphate: step 3/5. Catalyzes the reversible conversion of 3-phosphohydroxypyruvate to phosphoserine and of 3-hydroxy-2-oxo-4-phosphonooxybutanoate to phosphohydroxythreonine. This Acinetobacter baumannii (strain AB307-0294) protein is Phosphoserine aminotransferase.